Reading from the N-terminus, the 307-residue chain is Acetyl-coenzyme A carboxylase carboxyl transferase subunit beta (307 aa).

Residues 1–21 (MAMADQRNDKPGRPAAQRERR) form a disordered region. A CoA carboxyltransferase N-terminal domain is found at 43-307 (LWVKCPETGE…MGRERLSPAA (265 aa)).

The protein belongs to the AccD/PCCB family. Acetyl-CoA carboxylase is a heterohexamer composed of biotin carboxyl carrier protein (AccB), biotin carboxylase (AccC) and two subunits each of ACCase subunit alpha (AccA) and ACCase subunit beta (AccD).

Its subcellular location is the cytoplasm. The enzyme catalyses N(6)-carboxybiotinyl-L-lysyl-[protein] + acetyl-CoA = N(6)-biotinyl-L-lysyl-[protein] + malonyl-CoA. It functions in the pathway lipid metabolism; malonyl-CoA biosynthesis; malonyl-CoA from acetyl-CoA: step 1/1. Functionally, component of the acetyl coenzyme A carboxylase (ACC) complex. Biotin carboxylase (BC) catalyzes the carboxylation of biotin on its carrier protein (BCCP) and then the CO(2) group is transferred by the transcarboxylase to acetyl-CoA to form malonyl-CoA. The sequence is that of Acetyl-coenzyme A carboxylase carboxyl transferase subunit beta from Phenylobacterium zucineum (strain HLK1).